Consider the following 154-residue polypeptide: Interleukin-2 (154 aa).

Positions 1 to 20 (MYRMQLLSCIALSLALITNS) are cleaved as a signal peptide. The O-linked (GalNAc...) threonine glycan is linked to T23. C78 and C126 form a disulfide bridge.

It belongs to the IL-2 family.

It is found in the secreted. Functionally, cytokine produced by activated CD4-positive helper T-cells and to a lesser extend activated CD8-positive T-cells and natural killer (NK) cells that plays pivotal roles in the immune response and tolerance. Binds to a receptor complex composed of either the high-affinity trimeric IL-2R (IL2RA/CD25, IL2RB/CD122 and IL2RG/CD132) or the low-affinity dimeric IL-2R (IL2RB and IL2RG). Interaction with the receptor leads to oligomerization and conformation changes in the IL-2R subunits resulting in downstream signaling starting with phosphorylation of JAK1 and JAK3. In turn, JAK1 and JAK3 phosphorylate the receptor to form a docking site leading to the phosphorylation of several substrates including STAT5. This process leads to activation of several pathways including STAT, phosphoinositide-3-kinase/PI3K and mitogen-activated protein kinase/MAPK pathways. Functions as a T-cell growth factor and can increase NK-cell cytolytic activity as well. Promotes strong proliferation of activated B-cells and subsequently immunoglobulin production. Plays a pivotal role in regulating the adaptive immune system by controlling the survival and proliferation of regulatory T-cells, which are required for the maintenance of immune tolerance. Moreover, participates in the differentiation and homeostasis of effector T-cell subsets, including Th1, Th2, Th17 as well as memory CD8-positive T-cells. This Papio hamadryas (Hamadryas baboon) protein is Interleukin-2 (IL2).